A 360-amino-acid polypeptide reads, in one-letter code: GTPase Obg (360 aa).

Residues 1–156 form the Obg domain; the sequence is MFVDSVEIII…KCVRLELKLI (156 aa). An OBG-type G domain is found at 157 to 360; the sequence is ADIGLVGFPN…LKFVLLEALP (204 aa). GTP contacts are provided by residues 163-170, 188-192, 210-213, 279-282, and 341-343; these read GFPNAGKS, FTTLV, DIPG, NKCD, and SAV. Mg(2+)-binding residues include Ser-170 and Thr-190.

It belongs to the TRAFAC class OBG-HflX-like GTPase superfamily. OBG GTPase family. Monomer. Requires Mg(2+) as cofactor.

It is found in the cytoplasm. In terms of biological role, an essential GTPase which binds GTP, GDP and possibly (p)ppGpp with moderate affinity, with high nucleotide exchange rates and a fairly low GTP hydrolysis rate. Plays a role in control of the cell cycle, stress response, ribosome biogenesis and in those bacteria that undergo differentiation, in morphogenesis control. The polypeptide is GTPase Obg (Helicobacter acinonychis (strain Sheeba)).